The following is a 578-amino-acid chain: Paraneoplastic antigen Ma6F (578 aa).

Disordered stretches follow at residues A106–A221 and A441–K578. Positions A112–V129 are enriched in low complexity. A compositionally biased stretch (gly residues) spans G147–G159. Residues A160 to A173 show a composition bias toward low complexity. Residues G174 to E211 show a composition bias toward gly residues. Low complexity predominate over residues P449–A461. 2 stretches are compositionally biased toward acidic residues: residues S462–E473 and E556–A566.

The polypeptide is Paraneoplastic antigen Ma6F (Homo sapiens (Human)).